Reading from the N-terminus, the 242-residue chain is Tyrosine recombinase XerD-like (242 aa).

Residues 1 to 71 enclose the Core-binding (CB) domain; the sequence is MKEAIDQFIQ…AVNQFLYFLY (71 aa). The 153-residue stretch at 90 to 242 folds into the Tyr recombinase domain; that stretch reads ENSSQGSLLD…KSITTLEKYR (153 aa). Residues Lys-148 and Arg-209 contribute to the active site. Tyr-241 acts as the O-(3'-phospho-DNA)-tyrosine intermediate in catalysis.

Belongs to the 'phage' integrase family. XerD-like subfamily.

Its subcellular location is the cytoplasm. In terms of biological role, putative tyrosine recombinase. Not involved in the cutting and rejoining of the recombining DNA molecules on dif(SL) site. In Streptococcus gordonii (strain Challis / ATCC 35105 / BCRC 15272 / CH1 / DL1 / V288), this protein is Tyrosine recombinase XerD-like.